The chain runs to 356 residues: MSLDRIMNEAISPWMKGDGPDSDIVLSTRIRLARNLKNYHFPIMQTAEEANQITELFQQKLVNKTMRDFGSFELLKMNELTPLQRRVLVEKHLISPNLAETEFGACILSESEHISVMLNEEDHVRIQCLFPGLQLSEALQSANKIDNVFEEVVEYAFDEELGYVTSCPTNVGTGLRASVMIHLPALVLTKRINRIIQAIQQLGLVVRGIYGEGSEALGNIFQVSNQMTLGKSEEDIIADLTSVIHQLIQQEKAARELIVKNSSIELEDKVYRSYGILAHSRLIQSAEAATCLSDVRLGIDLGYIKDVSRNILTELMVLTQPGILQQYAGGQLGPEERDYRRAALIRERLRIEENEA.

The 231-residue stretch at isoleucine 24–alanine 254 folds into the Phosphagen kinase C-terminal domain. Residues serine 27 to arginine 31, histidine 92, arginine 125, arginine 176 to methionine 180, and arginine 207 to glutamate 212 each bind ATP. Residues arginine 337–alanine 342 carry the RDXXRA motif of the pArg binding pocket involved in allosteric regulation motif.

The protein belongs to the ATP:guanido phosphotransferase family.

It carries out the reaction L-arginyl-[protein] + ATP = N(omega)-phospho-L-arginyl-[protein] + ADP + H(+). Appears to be allosterically activated by the binding of pArg-containing polypeptides to the pArg-binding pocket localized in the C-terminal domain of McsB. In terms of biological role, catalyzes the specific phosphorylation of arginine residues in a large number of proteins. Is part of the bacterial stress response system. Protein arginine phosphorylation has a physiologically important role and is involved in the regulation of many critical cellular processes, such as protein homeostasis, motility, competence, and stringent and stress responses, by regulating gene expression and protein activity. In Bacillus cytotoxicus (strain DSM 22905 / CIP 110041 / 391-98 / NVH 391-98), this protein is Protein-arginine kinase.